Here is an 892-residue protein sequence, read N- to C-terminus: MLANAIAALLLGSGIASAAGHGSPLTSKAGHRAVIPDWDLKSSSDVSKDLGGLSKPGVDTSSWYHAGTSRCTIMGCLINAGVYNDEELWYSDNLNHVNWGQFSVPWVYRHEFALSPAKGKHFLLQTNGITSKADLFFNGKQIADKEYQSGAYAGRTYDITNLAAKKNALLVQVYPTDYLYDFALGYVDWNPYPSDNGSGIWRDITIKETGSVSMGPVSVLVDIDVPVEKNPARVTVRAEAQNLESHAVEFNAAAVISGNSCSGEALKQTIKLAPGEKKLVQFTQTIKTPSIWWPKQWGDQPLYTAEVTFSVKGAVSDTAQTKFGVRKVTSFVNQFNDTQYSVNGHPFQVIGGGYGADMFLRWDSERFTRIVEYMLDMHQNTIRLEGKMEHPELYEICDEYGLMVMPGWECCDKWEAWAYNDELAIFPPPVWDANDYETANYSMIHEAAMMQPHPSVLTFLVGSDFWPNDEAVVLYANALKNAGWQTPIIASASKRGFPALLGPGGMKMDGPYDWVPPNYWYDVEPSEDRLGAAFGFGSELGAGVGTPELSSLRRFLNQSDLDDLWKNPNKNLFHMSTNASSFYNRKIYNQGLWKRYGAPTSLDDYLLKAQMMDYEATRAQYEGFGALWTASRPATGVIYWMLNNAWPSLHWNQFDYYLHPAGSYFGTKVGSRIEHVAYNYQKKEIWVINHSLYQTGSRNIKVELIDMNGKQIAKKLVQVRTKANSGFKAMDISSDINKLSSVAFLRLVLSDEKGSVLSRNVYWVTKTIDELNWDESTWYYTPVSKFVDYTPLNTLATAQVSVTTSGGKHLPGIPGSQTRTVTLENKSSVPAVFIRLTLVDSKGNDVNPVSWSDNYVTLWPHEKLQLEVGGWDGSGDKIQISGKNIKATTVKL.

The N-terminal stretch at Met-1–Ala-18 is a signal peptide. Positions Ala-19–Lys-28 are excised as a propeptide. N-linked (GlcNAc...) asparagine glycans are attached at residues Asn-196, Asn-336, and Asn-440. Asp-464 acts as the Proton donor in catalysis. The Nucleophile role is filled by Glu-539. Asn-557, Asn-578, Asn-689, and Asn-825 each carry an N-linked (GlcNAc...) asparagine glycan.

Belongs to the glycosyl hydrolase 2 family. As to quaternary structure, monomer.

Its subcellular location is the secreted. The protein resides in the extracellular space. It catalyses the reaction Hydrolysis of chitosan or chitosan oligosaccharides to remove successive D-glucosamine residues from the non-reducing termini.. Functionally, hydrolyzes chitosan and chitooligosaccharides with retention of anomeric configuration. Has no activity against beta-D-galactoside, beta-D-glucuronide, beta-D-mannoside, chitin, glycol chitosan, cellulose, N,N'-diacetylchitibiose and pNP-GlcNAc. This Hypocrea jecorina (Trichoderma reesei) protein is Exo-beta-D-glucosaminidase.